The chain runs to 355 residues: (R,S)-reticuline 7-O-methyltransferase (355 aa).

Residues 197–200, D221, 221–222, 241–242, and K255 each bind S-adenosyl-L-methionine; these read VGGG, DL, and DM. Catalysis depends on H259, which acts as the Proton acceptor.

This sequence belongs to the class I-like SAM-binding methyltransferase superfamily. Cation-independent O-methyltransferase family. In terms of assembly, homodimer. As to expression, expressed in capsules, buds and stems, and at lower levels in leaves. Localized to parenchyma cells within the vascular bundle, but only to those cells distal to laticifers. In roots, found in the pericycle within the stele.

The catalysed reaction is (S)-reticuline + S-adenosyl-L-methionine = (S)-laudanine + S-adenosyl-L-homocysteine + H(+). The enzyme catalyses (R)-reticuline + S-adenosyl-L-methionine = (R)-laudanine + S-adenosyl-L-homocysteine + H(+). Functionally, catalyzes the transfer of a methyl group to reticuline to form laudanine. Methylates the simple catechols guaiacol and isovanillic acid as well as the tetrahydrobenzylisoquinolines (R)-reticuline, (S)-reticuline, (R,S)-orientaline, (R)-protosinomenine and (R,S)-isoorientaline. Involved in the production of laudanine. The polypeptide is (R,S)-reticuline 7-O-methyltransferase (Papaver somniferum (Opium poppy)).